Here is a 254-residue protein sequence, read N- to C-terminus: Ribosomal RNA small subunit methyltransferase G (254 aa).

The disordered stretch occupies residues 1 to 21 (MPEGDGVPRETPSPSVVPESP). The segment covering 9-21 (RETPSPSVVPESP) has biased composition (low complexity). Residues Gly-90, Leu-95, 142-143 (AE), and Arg-157 contribute to the S-adenosyl-L-methionine site. Residues 230–254 (GPLRAATAPAPPGAAKRRPGKGNRR) are disordered. Positions 244 to 254 (AKRRPGKGNRR) are enriched in basic residues.

Belongs to the methyltransferase superfamily. RNA methyltransferase RsmG family.

The protein resides in the cytoplasm. In terms of biological role, specifically methylates the N7 position of guanine in position 518 of 16S rRNA. This is Ribosomal RNA small subunit methyltransferase G from Kineococcus radiotolerans (strain ATCC BAA-149 / DSM 14245 / SRS30216).